A 222-amino-acid chain; its full sequence is VDGEQLEAAHQALREAVADCQRAGKRTLVLGGGHETAFGHGAGVLDAFPGEKVGIINLDAHLDLRFADCASSGTPFRQLALECDAQQRGFHYTCIGVSRAANTQALWDEAARRQVAIVEDLEVLTAFETRVLPELERNIAQFDRLYLTIDLDVLPAREMPAVSAPAALGVPLGTLLRIVEPLCRSGKLQAVDLVEFNPLFDIDGQGARAAARVAWQIAHWWR.

Residues H34, D59, H61, D63, D150, and D152 each contribute to the Mn(2+) site.

It belongs to the arginase family. Mn(2+) is required as a cofactor.

It catalyses the reaction N-formimidoyl-L-glutamate + H2O = formamide + L-glutamate. It participates in amino-acid degradation; L-histidine degradation into L-glutamate; L-glutamate from N-formimidoyl-L-glutamate (hydrolase route): step 1/1. Its function is as follows. Catalyzes the conversion of N-formimidoyl-L-glutamate to L-glutamate and formamide. The protein is Formimidoylglutamase (hutG) of Klebsiella aerogenes (Enterobacter aerogenes).